We begin with the raw amino-acid sequence, 206 residues long: Small ribosomal subunit protein uS4A (206 aa).

The 67-residue stretch at 98–164 (MRLDNVVYKL…EKFKTFAENP (67 aa)) folds into the S4 RNA-binding domain.

It belongs to the universal ribosomal protein uS4 family. Part of the 30S ribosomal subunit. Contacts protein S5. The interaction surface between S4 and S5 is involved in control of translational fidelity.

Its function is as follows. One of the primary rRNA binding proteins, it binds directly to 16S rRNA where it nucleates assembly of the body of the 30S subunit. With S5 and S12 plays an important role in translational accuracy. The protein is Small ribosomal subunit protein uS4A of Clostridium novyi (strain NT).